Reading from the N-terminus, the 359-residue chain is 3-dehydroquinate synthase (359 aa).

Residues 71–76 (DGEAYK), 105–109 (GVVGD), 129–130 (TT), lysine 142, and lysine 151 contribute to the NAD(+) site. Zn(2+)-binding residues include glutamate 184, histidine 247, and histidine 264.

It belongs to the sugar phosphate cyclases superfamily. Dehydroquinate synthase family. The cofactor is Co(2+). It depends on Zn(2+) as a cofactor. Requires NAD(+) as cofactor.

It localises to the cytoplasm. The catalysed reaction is 7-phospho-2-dehydro-3-deoxy-D-arabino-heptonate = 3-dehydroquinate + phosphate. It participates in metabolic intermediate biosynthesis; chorismate biosynthesis; chorismate from D-erythrose 4-phosphate and phosphoenolpyruvate: step 2/7. Functionally, catalyzes the conversion of 3-deoxy-D-arabino-heptulosonate 7-phosphate (DAHP) to dehydroquinate (DHQ). This Burkholderia lata (strain ATCC 17760 / DSM 23089 / LMG 22485 / NCIMB 9086 / R18194 / 383) protein is 3-dehydroquinate synthase.